The chain runs to 261 residues: 4-hydroxy-tetrahydrodipicolinate reductase (261 aa).

9 to 14 is an NAD(+) binding site; it reads GCLGRM. Residue arginine 36 coordinates NADP(+). NAD(+)-binding positions include 97–99 and 118–121; these read GTT and SANM. Histidine 151 serves as the catalytic Proton donor/acceptor. Histidine 152 is a binding site for (S)-2,3,4,5-tetrahydrodipicolinate. The Proton donor role is filled by lysine 155. A (S)-2,3,4,5-tetrahydrodipicolinate-binding site is contributed by 161 to 162; sequence GT.

Belongs to the DapB family.

It is found in the cytoplasm. It carries out the reaction (S)-2,3,4,5-tetrahydrodipicolinate + NAD(+) + H2O = (2S,4S)-4-hydroxy-2,3,4,5-tetrahydrodipicolinate + NADH + H(+). It catalyses the reaction (S)-2,3,4,5-tetrahydrodipicolinate + NADP(+) + H2O = (2S,4S)-4-hydroxy-2,3,4,5-tetrahydrodipicolinate + NADPH + H(+). Its pathway is amino-acid biosynthesis; L-lysine biosynthesis via DAP pathway; (S)-tetrahydrodipicolinate from L-aspartate: step 4/4. Functionally, catalyzes the conversion of 4-hydroxy-tetrahydrodipicolinate (HTPA) to tetrahydrodipicolinate. This Wolbachia sp. subsp. Drosophila simulans (strain wRi) protein is 4-hydroxy-tetrahydrodipicolinate reductase.